The sequence spans 304 residues: Killer cell immunoglobulin-like receptor 2DS4 (304 aa).

A signal peptide spans 1 to 21; the sequence is MSLMVIIMACVGFFLLQGAWP. Residues 22–245 are Extracellular-facing; that stretch reads QEGVHRKPSF…SKTGNPRHLH (224 aa). Ig-like C2-type domains lie at 42–107 and 142–205; these read EETV…VPHS and GENV…FRDA. A disulfide bond links cysteine 49 and cysteine 100. Asparagine 67, asparagine 84, asparagine 144, asparagine 178, and asparagine 211 each carry an N-linked (GlcNAc...) asparagine glycan. A disulfide bond links cysteine 149 and cysteine 198. Residues 220-239 are disordered; it reads VTGNPSNSWPSPTEPSSKTG. Residues 246–265 form a helical membrane-spanning segment; it reads VLIGTSVVKIPFTILLFFLL. Residues 266 to 304 are Cytoplasmic-facing; sequence HRWCSDKKNAAVMDQEPAGNRTVNSEDSDEQDHQEVSYA. Residues 280–304 form a disordered region; that stretch reads QEPAGNRTVNSEDSDEQDHQEVSYA.

This sequence belongs to the immunoglobulin superfamily. As to quaternary structure, interacts with HLA-F; this interaction is direct.

The protein localises to the cell membrane. Functionally, receptor on natural killer (NK) cells for HLA-C alleles. Does not inhibit the activity of NK cells. In Homo sapiens (Human), this protein is Killer cell immunoglobulin-like receptor 2DS4.